The chain runs to 233 residues: Biosynthetic peptidoglycan transglycosylase (233 aa).

The chain crosses the membrane as a helical span at residues 7 to 27; sequence VFTWLAKLVLGLFFASILSVV.

Belongs to the glycosyltransferase 51 family.

It localises to the cell inner membrane. It catalyses the reaction [GlcNAc-(1-&gt;4)-Mur2Ac(oyl-L-Ala-gamma-D-Glu-L-Lys-D-Ala-D-Ala)](n)-di-trans,octa-cis-undecaprenyl diphosphate + beta-D-GlcNAc-(1-&gt;4)-Mur2Ac(oyl-L-Ala-gamma-D-Glu-L-Lys-D-Ala-D-Ala)-di-trans,octa-cis-undecaprenyl diphosphate = [GlcNAc-(1-&gt;4)-Mur2Ac(oyl-L-Ala-gamma-D-Glu-L-Lys-D-Ala-D-Ala)](n+1)-di-trans,octa-cis-undecaprenyl diphosphate + di-trans,octa-cis-undecaprenyl diphosphate + H(+). It participates in cell wall biogenesis; peptidoglycan biosynthesis. Peptidoglycan polymerase that catalyzes glycan chain elongation from lipid-linked precursors. The polypeptide is Biosynthetic peptidoglycan transglycosylase (Shewanella oneidensis (strain ATCC 700550 / JCM 31522 / CIP 106686 / LMG 19005 / NCIMB 14063 / MR-1)).